The following is a 388-amino-acid chain: 1-deoxy-D-xylulose 5-phosphate reductoisomerase (388 aa).

Residues Thr10, Gly11, Ser12, Ile13, Lys37, Asn38, and Asn123 each contribute to the NADPH site. Lys124 contributes to the 1-deoxy-D-xylulose 5-phosphate binding site. Position 125 (Glu125) interacts with NADPH. Asp149 lines the Mn(2+) pocket. Positions 150, 151, 175, and 198 each coordinate 1-deoxy-D-xylulose 5-phosphate. Glu151 contributes to the Mn(2+) binding site. Residue Gly204 coordinates NADPH. Positions 211, 216, 217, and 220 each coordinate 1-deoxy-D-xylulose 5-phosphate. Glu220 contributes to the Mn(2+) binding site.

It belongs to the DXR family. Mg(2+) is required as a cofactor. The cofactor is Mn(2+).

It carries out the reaction 2-C-methyl-D-erythritol 4-phosphate + NADP(+) = 1-deoxy-D-xylulose 5-phosphate + NADPH + H(+). It participates in isoprenoid biosynthesis; isopentenyl diphosphate biosynthesis via DXP pathway; isopentenyl diphosphate from 1-deoxy-D-xylulose 5-phosphate: step 1/6. Catalyzes the NADPH-dependent rearrangement and reduction of 1-deoxy-D-xylulose-5-phosphate (DXP) to 2-C-methyl-D-erythritol 4-phosphate (MEP). In Pelagibacter ubique (strain HTCC1062), this protein is 1-deoxy-D-xylulose 5-phosphate reductoisomerase.